The sequence spans 396 residues: CCA-adding enzyme (396 aa).

Residues G27 and R30 each coordinate ATP. G27 and R30 together coordinate CTP. Residues D40 and D42 each coordinate Mg(2+). ATP is bound by residues R111, D154, R157, R160, and R163. Positions 111, 154, 157, 160, and 163 each coordinate CTP.

This sequence belongs to the tRNA nucleotidyltransferase/poly(A) polymerase family. Bacterial CCA-adding enzyme type 3 subfamily. Homodimer. It depends on Mg(2+) as a cofactor.

The enzyme catalyses a tRNA precursor + 2 CTP + ATP = a tRNA with a 3' CCA end + 3 diphosphate. It catalyses the reaction a tRNA with a 3' CCA end + 2 CTP + ATP = a tRNA with a 3' CCACCA end + 3 diphosphate. Functionally, catalyzes the addition and repair of the essential 3'-terminal CCA sequence in tRNAs without using a nucleic acid template. Adds these three nucleotides in the order of C, C, and A to the tRNA nucleotide-73, using CTP and ATP as substrates and producing inorganic pyrophosphate. tRNA 3'-terminal CCA addition is required both for tRNA processing and repair. Also involved in tRNA surveillance by mediating tandem CCA addition to generate a CCACCA at the 3' terminus of unstable tRNAs. While stable tRNAs receive only 3'-terminal CCA, unstable tRNAs are marked with CCACCA and rapidly degraded. The sequence is that of CCA-adding enzyme from Pediococcus pentosaceus (strain ATCC 25745 / CCUG 21536 / LMG 10740 / 183-1w).